A 630-amino-acid polypeptide reads, in one-letter code: Probable potassium transport system protein Kup (630 aa).

12 consecutive transmembrane segments (helical) span residues 17 to 37 (LAIA…LYSL), 51 to 71 (PSAI…VVGI), 105 to 125 (ITGL…GDAV), 144 to 164 (PQLS…LFWI), 175 to 195 (LFGP…IYHI), 218 to 238 (VLLA…AEAL), 255 to 275 (YVLV…LLLL), 283 to 303 (PFFL…STVA), 344 to 364 (IYVP…VIGF), 374 to 394 (YGIA…VVMV), 402 to 422 (LLVA…FGAN), and 428 to 448 (QGGW…MTWY).

Belongs to the HAK/KUP transporter (TC 2.A.72) family.

The protein localises to the cell inner membrane. It catalyses the reaction K(+)(in) + H(+)(in) = K(+)(out) + H(+)(out). In terms of biological role, transport of potassium into the cell. Likely operates as a K(+):H(+) symporter. The chain is Probable potassium transport system protein Kup from Burkholderia pseudomallei (strain K96243).